The sequence spans 504 residues: MEKFQGYLEFDGARQQSFLYPLFFREYIYVLAYDHGLNRLNRNRSIFFENADYDKKYSSLIVKRLILRMYEQNRLIIPTKDLNQNHFLGHTSLFYYQIISVLFAVIVEIPFSLRLGSSFEGKQLKKSDNLQSIHSIFPFLEDKFSHFNYVLDLQIPYPIHLEILVQTLRYRVKDASSLHFFRFCLYEYCNWKNFYIKKKAILNPRIFLFLYNSHICEYESIFFFLRKRSSHLRSTSYEVLFERILFYGKIQHFLKVFVNNFPAILGLLKDPFIHYVRYHGRCILATKDTPLLMNKWKYYFVNLWQCYFSVWFQSQKVNINQLSKDNLEFLGYLSSLRLNPLVVRSQMLENSFLMDNVRIKLDTKIPISSISRSLAKDKFCNVLGHPISKATWTDSSDSDILNRFVRICRNISHYYSGSSKKNNLYRIKYILRQSCVKTLARKHKSTVRAFLKGLGSGLLEEFLTGEDQILSLIFPRSYYASKRLYRVRIWYLDILYLNDLVNHE.

It belongs to the intron maturase 2 family. MatK subfamily.

The protein localises to the plastid. It is found in the chloroplast. Functionally, usually encoded in the trnK tRNA gene intron. Probably assists in splicing its own and other chloroplast group II introns. The sequence is that of Maturase K from Lepidium virginicum (Virginia pepperweed).